Here is a 332-residue protein sequence, read N- to C-terminus: 2,3-diketo-L-gulonate reductase (332 aa).

The active-site Proton donor is histidine 44. NAD(+) is bound by residues isoleucine 168–serine 174, tryptophan 224–lysine 225, and glycine 304–glutamate 306.

It belongs to the LDH2/MDH2 oxidoreductase family. DlgD subfamily. In terms of assembly, homodimer.

It localises to the cytoplasm. The enzyme catalyses 3-dehydro-L-gulonate + NAD(+) = 2,3-dioxo-L-gulonate + NADH + H(+). The catalysed reaction is 3-dehydro-L-gulonate + NADP(+) = 2,3-dioxo-L-gulonate + NADPH + H(+). Functionally, catalyzes the reduction of 2,3-diketo-L-gulonate in the presence of NADH, to form 3-keto-L-gulonate. The sequence is that of 2,3-diketo-L-gulonate reductase from Escherichia coli (strain K12 / MC4100 / BW2952).